The primary structure comprises 85 residues: Large ribosomal subunit protein uL23 (85 aa).

Belongs to the universal ribosomal protein uL23 family. As to quaternary structure, part of the 50S ribosomal subunit. Interacts with protein L29 and weakly with protein L39e.

In terms of biological role, binds to a specific region on the 23S rRNA. Located at the polypeptide exit tunnel on the outside of the subunit. This chain is Large ribosomal subunit protein uL23, found in Haloarcula marismortui (strain ATCC 43049 / DSM 3752 / JCM 8966 / VKM B-1809) (Halobacterium marismortui).